The sequence spans 466 residues: ATP synthase subunit beta (466 aa).

An ATP-binding site is contributed by 153 to 160 (GGAGVGKT).

The protein belongs to the ATPase alpha/beta chains family. In terms of assembly, F-type ATPases have 2 components, CF(1) - the catalytic core - and CF(0) - the membrane proton channel. CF(1) has five subunits: alpha(3), beta(3), gamma(1), delta(1), epsilon(1). CF(0) has three main subunits: a(1), b(2) and c(9-12). The alpha and beta chains form an alternating ring which encloses part of the gamma chain. CF(1) is attached to CF(0) by a central stalk formed by the gamma and epsilon chains, while a peripheral stalk is formed by the delta and b chains.

It is found in the cell membrane. It catalyses the reaction ATP + H2O + 4 H(+)(in) = ADP + phosphate + 5 H(+)(out). Functionally, produces ATP from ADP in the presence of a proton gradient across the membrane. The catalytic sites are hosted primarily by the beta subunits. This is ATP synthase subunit beta from Leuconostoc citreum (strain KM20).